The chain runs to 227 residues: Isopentenyl-diphosphate Delta-isomerase 1 (227 aa).

Lysine 36 is a binding site for substrate. The Mg(2+) site is built by histidine 40 and histidine 51. The 151-residue stretch at leucine 49–isoleucine 199 folds into the Nudix hydrolase domain. Substrate-binding residues include arginine 70 and lysine 74. Residue cysteine 86 is part of the active site. Serine 87 is a substrate binding site. The Mg(2+) site is built by glutamate 146 and glutamate 148. Residue glutamate 148 is part of the active site. Lysine 176 is modified (N6-acetyllysine). Residues histidine 225–methionine 227 carry the Microbody targeting signal motif.

The protein belongs to the IPP isomerase type 1 family. As to quaternary structure, monomer. Mg(2+) is required as a cofactor.

The protein localises to the peroxisome. It carries out the reaction isopentenyl diphosphate = dimethylallyl diphosphate. It participates in isoprenoid biosynthesis; dimethylallyl diphosphate biosynthesis; dimethylallyl diphosphate from isopentenyl diphosphate: step 1/1. In terms of biological role, catalyzes the 1,3-allylic rearrangement of the homoallylic substrate isopentenyl (IPP) to its highly electrophilic allylic isomer, dimethylallyl diphosphate (DMAPP). This chain is Isopentenyl-diphosphate Delta-isomerase 1 (IDI1), found in Macaca fascicularis (Crab-eating macaque).